The following is a 157-amino-acid chain: Transcriptional regulator AzlB (157 aa).

The HTH asnC-type domain occupies 5–66 (LDETDKAILR…IVDEKKLGIE (62 aa)). Residues 24-43 (NLNLSKKIGLSPSACLARTK) constitute a DNA-binding region (H-T-H motif).

Functionally, transcriptional repressor of the azlBCD operon involved in branched-chain amino acid transport. This Bacillus subtilis (strain 168) protein is Transcriptional regulator AzlB (azlB).